A 619-amino-acid chain; its full sequence is E3 ubiquitin-protein ligase DTX4 (619 aa).

2 WWE domains span residues 1-78 (MLLA…PVRR) and 79-155 (NYYD…RVRR). Disordered regions lie at residues 238-281 (KPLD…PGPN) and 358-389 (PPPVSKSEIKSIPGVSNTSRKTTKKQAKKGKT). Positions 261–273 (QASSMPTGTTMGS) are enriched in polar residues. The span at 378–387 (KTTKKQAKKG) shows a compositional bias: basic residues. An RING-type; atypical zinc finger spans residues 409-468 (CTICMERLTAPSGYKGPQPTVKPDLVGKLSRCGHVYHIYCLVAMYNNGNKDGSLQCPTCK).

The protein belongs to the Deltex family. As to quaternary structure, interacts with NLRP4.

The protein localises to the cytoplasm. It catalyses the reaction S-ubiquitinyl-[E2 ubiquitin-conjugating enzyme]-L-cysteine + [acceptor protein]-L-lysine = [E2 ubiquitin-conjugating enzyme]-L-cysteine + N(6)-ubiquitinyl-[acceptor protein]-L-lysine.. Its pathway is protein modification; protein ubiquitination. Its function is as follows. Regulator of Notch signaling, a signaling pathway involved in cell-cell communications that regulates a broad spectrum of cell-fate determinations. Functions as a ubiquitin ligase protein in vivo, mediating 'Lys48'-linked polyubiquitination and promoting degradation of TBK1, targeting to TBK1 requires interaction with NLRP4. The protein is E3 ubiquitin-protein ligase DTX4 (DTX4) of Homo sapiens (Human).